Reading from the N-terminus, the 507-residue chain is Polygalacturonase (507 aa).

The N-terminal stretch at methionine 1 to alanine 20 is a signal peptide. The propeptide occupies alanine 21–histidine 54. 6 PbH1 repeats span residues cysteine 215–alanine 241, serine 242–threonine 263, serine 265–serine 285, valine 295–threonine 316, alanine 324–glutamine 345, and arginine 358–cysteine 385. The active-site Proton donor is aspartate 256. N-linked (GlcNAc...) asparagine glycosylation is present at asparagine 267. The active site involves histidine 279.

The protein belongs to the glycosyl hydrolase 28 family.

It is found in the secreted. It localises to the cell wall. It carries out the reaction (1,4-alpha-D-galacturonosyl)n+m + H2O = (1,4-alpha-D-galacturonosyl)n + (1,4-alpha-D-galacturonosyl)m.. This chain is Polygalacturonase (JNA2), found in Juniperus ashei (Ozark white cedar).